Here is a 320-residue protein sequence, read N- to C-terminus: Acetyl-coenzyme A carboxylase carboxyl transferase subunit alpha (320 aa).

The CoA carboxyltransferase C-terminal domain maps to 41 to 295 (RIEEKAGQAL…GDAIAQAFDE (255 aa)).

Belongs to the AccA family. Acetyl-CoA carboxylase is a heterohexamer composed of biotin carboxyl carrier protein (AccB), biotin carboxylase (AccC) and two subunits each of ACCase subunit alpha (AccA) and ACCase subunit beta (AccD).

It localises to the cytoplasm. The enzyme catalyses N(6)-carboxybiotinyl-L-lysyl-[protein] + acetyl-CoA = N(6)-biotinyl-L-lysyl-[protein] + malonyl-CoA. It functions in the pathway lipid metabolism; malonyl-CoA biosynthesis; malonyl-CoA from acetyl-CoA: step 1/1. In terms of biological role, component of the acetyl coenzyme A carboxylase (ACC) complex. First, biotin carboxylase catalyzes the carboxylation of biotin on its carrier protein (BCCP) and then the CO(2) group is transferred by the carboxyltransferase to acetyl-CoA to form malonyl-CoA. The chain is Acetyl-coenzyme A carboxylase carboxyl transferase subunit alpha from Bradyrhizobium sp. (strain ORS 278).